We begin with the raw amino-acid sequence, 23 residues long: Cytochrome c oxidase subunit 7A-liver, mitochondrial (23 aa).

It belongs to the cytochrome c oxidase VIIa family. In terms of assembly, component of the cytochrome c oxidase (complex IV, CIV), a multisubunit enzyme composed of 14 subunits. The complex is composed of a catalytic core of 3 subunits MT-CO1, MT-CO2 and MT-CO3, encoded in the mitochondrial DNA, and 11 supernumerary subunits COX4I, COX5A, COX5B, COX6A, COX6B, COX6C, COX7A, COX7B, COX7C, COX8 and NDUFA4, which are encoded in the nuclear genome. The complex exists as a monomer or a dimer and forms supercomplexes (SCs) in the inner mitochondrial membrane with NADH-ubiquinone oxidoreductase (complex I, CI) and ubiquinol-cytochrome c oxidoreductase (cytochrome b-c1 complex, complex III, CIII), resulting in different assemblies (supercomplex SCI(1)III(2)IV(1) and megacomplex MCI(2)III(2)IV(2)).

It is found in the mitochondrion inner membrane. The protein operates within energy metabolism; oxidative phosphorylation. In terms of biological role, component of the cytochrome c oxidase, the last enzyme in the mitochondrial electron transport chain which drives oxidative phosphorylation. The respiratory chain contains 3 multisubunit complexes succinate dehydrogenase (complex II, CII), ubiquinol-cytochrome c oxidoreductase (cytochrome b-c1 complex, complex III, CIII) and cytochrome c oxidase (complex IV, CIV), that cooperate to transfer electrons derived from NADH and succinate to molecular oxygen, creating an electrochemical gradient over the inner membrane that drives transmembrane transport and the ATP synthase. Cytochrome c oxidase is the component of the respiratory chain that catalyzes the reduction of oxygen to water. Electrons originating from reduced cytochrome c in the intermembrane space (IMS) are transferred via the dinuclear copper A center (CU(A)) of subunit 2 and heme A of subunit 1 to the active site in subunit 1, a binuclear center (BNC) formed by heme A3 and copper B (CU(B)). The BNC reduces molecular oxygen to 2 water molecules using 4 electrons from cytochrome c in the IMS and 4 protons from the mitochondrial matrix. This chain is Cytochrome c oxidase subunit 7A-liver, mitochondrial, found in Oncorhynchus mykiss (Rainbow trout).